The primary structure comprises 313 residues: Homoserine O-acetyltransferase (313 aa).

Residue Cys142 is the Acyl-thioester intermediate of the active site. Substrate is bound by residues Lys163 and Ser191. The active-site Proton acceptor is the His234. Glu236 is a catalytic residue. Position 248 (Arg248) interacts with substrate.

The protein belongs to the MetA family.

It is found in the cytoplasm. It carries out the reaction L-homoserine + acetyl-CoA = O-acetyl-L-homoserine + CoA. It functions in the pathway amino-acid biosynthesis; L-methionine biosynthesis via de novo pathway; O-acetyl-L-homoserine from L-homoserine: step 1/1. Transfers an acetyl group from acetyl-CoA to L-homoserine, forming acetyl-L-homoserine. This Streptococcus gordonii (strain Challis / ATCC 35105 / BCRC 15272 / CH1 / DL1 / V288) protein is Homoserine O-acetyltransferase.